The chain runs to 491 residues: Delayed-rectifier potassium channel regulatory subunit KCNS3 (491 aa).

The Cytoplasmic portion of the chain corresponds to 1 to 182 (MVFGEFFHRP…IRMENPAYCL (182 aa)). Residues 183–204 (SAKLIAISSLSVVLASIVAMCV) form a helical membrane-spanning segment. Topologically, residues 205–220 (HSMSEFQNEDGEVDDP) are extracellular. A helical transmembrane segment spans residues 221 to 243 (VLEGVEIACIAWFTGELAIRLVA). Over 244-254 (APSQKKFWKNP) the chain is Cytoplasmic. The helical transmembrane segment at 255 to 275 (LNIIDFVSIIPFYATLAVDTK) threads the bilayer. Residues 276–285 (EEESEDIENM) lie on the Extracellular side of the membrane. The chain crosses the membrane as a helical; Voltage-sensor span at residues 286 to 306 (GKVVQILRLMRIFRILKLARH). Residues 307–321 (SVGLRSLGATLRHSY) lie on the Cytoplasmic side of the membrane. The chain crosses the membrane as a helical span at residues 322 to 343 (HEVGLLLLFLSVGISIFSVLIY). At 344–357 (SVEKDELASSLTSI) the chain is on the extracellular side. The segment at residues 358-369 (PICWWWATISMT) is an intramembrane region (helical). A Selectivity filter motif is present at residues 370–375 (TVGYGD). An intramembrane segment occupies 370-377 (TVGYGDTH). Over 378–384 (PVTLAGK) the chain is Extracellular. The helical transmembrane segment at 385-413 (IIASTCIICGILVVALPITIIFNKFSKYY) threads the bilayer. At 414–491 (QKQKDMDVDQ…TASLENCTAK (78 aa)) the chain is on the cytoplasmic side.

Belongs to the potassium channel family. S (TC 1.A.1.2) subfamily. Kv9.3/KCNS3 sub-subfamily. Heterotetramer with KCNB1. Does not form homomultimers. As to expression, expressed in myocytes. Detected in lung, spleen, brain and heart.

The protein resides in the cell membrane. Functionally, potassium channel regulatory subunit that modulates the delayed rectifier potassium channel activity of KCNB1 by namely slowing down the deactivation and inactivation time constants. While it does not form functional channel on its own, it can form functional heterotetrameric channels with KCNB1. The polypeptide is Delayed-rectifier potassium channel regulatory subunit KCNS3 (Rattus norvegicus (Rat)).